A 111-amino-acid polypeptide reads, in one-letter code: Large ribosomal subunit protein uL22 (111 aa).

Belongs to the universal ribosomal protein uL22 family. Part of the 50S ribosomal subunit.

Functionally, this protein binds specifically to 23S rRNA; its binding is stimulated by other ribosomal proteins, e.g. L4, L17, and L20. It is important during the early stages of 50S assembly. It makes multiple contacts with different domains of the 23S rRNA in the assembled 50S subunit and ribosome. In terms of biological role, the globular domain of the protein is located near the polypeptide exit tunnel on the outside of the subunit, while an extended beta-hairpin is found that lines the wall of the exit tunnel in the center of the 70S ribosome. The sequence is that of Large ribosomal subunit protein uL22 from Alkalilimnicola ehrlichii (strain ATCC BAA-1101 / DSM 17681 / MLHE-1).